The following is a 204-amino-acid chain: N-(5'-phosphoribosyl)anthranilate isomerase (204 aa).

Belongs to the TrpF family.

The catalysed reaction is N-(5-phospho-beta-D-ribosyl)anthranilate = 1-(2-carboxyphenylamino)-1-deoxy-D-ribulose 5-phosphate. It participates in amino-acid biosynthesis; L-tryptophan biosynthesis; L-tryptophan from chorismate: step 3/5. The polypeptide is N-(5'-phosphoribosyl)anthranilate isomerase (Bacillus cereus (strain ZK / E33L)).